Reading from the N-terminus, the 140-residue chain is Profilin-1 (140 aa).

A2 carries the N-acetylalanine modification. S28 is subject to Phosphoserine. A Glycyl lysine isopeptide (Lys-Gly) (interchain with G-Cter in SUMO2); alternate cross-link involves residue K54. Residue K54 forms a Glycyl lysine isopeptide (Lys-Gly) (interchain with G-Cter in ubiquitin); alternate linkage. A Phosphoserine modification is found at S57. An N6-acetyllysine modification is found at K108. Residue Y129 is modified to Phosphotyrosine. S138 carries the post-translational modification Phosphoserine; by ROCK1.

Belongs to the profilin family. As to quaternary structure, found in a complex with XPO6, Ran, ACTB and PFN1. Interacts with ACTB. Interacts with VASP. Interacts with HTT. Interacts with SH3BGRL. Occurs in many kinds of cells as a complex with monomeric actin in a 1:1 ratio. Interacts with ACTMAP. Phosphorylation at Ser-138 reduces its affinity for G-actin and blocks its interaction with HTT, reducing its ability to inhibit androgen receptor (AR) and HTT aggregation.

It localises to the cytoplasm. The protein localises to the cytoskeleton. Functionally, binds to actin and affects the structure of the cytoskeleton. At high concentrations, profilin prevents the polymerization of actin, whereas it enhances it at low concentrations. By binding to PIP2, it inhibits the formation of IP3 and DG. Inhibits androgen receptor (AR) and HTT aggregation and binding of G-actin is essential for its inhibition of AR. In Mus musculus (Mouse), this protein is Profilin-1 (Pfn1).